The following is a 221-amino-acid chain: ATP phosphoribosyltransferase (221 aa).

This sequence belongs to the ATP phosphoribosyltransferase family. Short subfamily. In terms of assembly, heteromultimer composed of HisG and HisZ subunits.

The protein localises to the cytoplasm. The enzyme catalyses 1-(5-phospho-beta-D-ribosyl)-ATP + diphosphate = 5-phospho-alpha-D-ribose 1-diphosphate + ATP. The protein operates within amino-acid biosynthesis; L-histidine biosynthesis; L-histidine from 5-phospho-alpha-D-ribose 1-diphosphate: step 1/9. Its function is as follows. Catalyzes the condensation of ATP and 5-phosphoribose 1-diphosphate to form N'-(5'-phosphoribosyl)-ATP (PR-ATP). Has a crucial role in the pathway because the rate of histidine biosynthesis seems to be controlled primarily by regulation of HisG enzymatic activity. The chain is ATP phosphoribosyltransferase from Symbiobacterium thermophilum (strain DSM 24528 / JCM 14929 / IAM 14863 / T).